The primary structure comprises 730 residues: ATP-binding cassette sub-family D member 1 (730 aa).

4 consecutive transmembrane segments (helical) span residues 24 to 44, 137 to 157, 169 to 189, and 276 to 296; these read AFSYALVTSAILALTIKVTIP, FCLISRTFLSIYVAALEGALV, ALVLLKWFGIAIPATFVNSMI, and ANIITGPALSIGVIALTAHIL. An ABC transmembrane type-1 domain is found at 136–373; the sequence is TFCLISRTFL…WFIMLEQFFM (238 aa). Residues 505 to 727 form the ABC transporter domain; it reads ISLRAVPVVT…MNSDEEQKGQ (223 aa). 538–545 is an ATP binding site; the sequence is GPNGCGKS.

The protein belongs to the ABC transporter superfamily. ABCD family. Peroxisomal fatty acyl CoA transporter (TC 3.A.1.203) subfamily.

It is found in the peroxisome membrane. It catalyses the reaction an acyl-CoA(out) + ATP + H2O = an acyl-CoA(in) + ADP + phosphate + H(+). Functionally, plays a role in the transport of free very-long-chain fatty acids (VLCFAs) as well as their CoA-esters across the peroxisomal membrane by acting as an ATP-specific binding subunit releasing ADP after ATP hydrolysis. Thus, plays a role in regulation of VLCFAs and energy metabolism namely, in the degradation and biosynthesis of fatty acids by beta-oxidation, mitochondrial function and microsomal fatty acid elongation. The polypeptide is ATP-binding cassette sub-family D member 1 (Drosophila melanogaster (Fruit fly)).